The following is a 97-amino-acid chain: Small cell adhesion glycoprotein (97 aa).

Residues 1–36 (MTSLLTTPSPREELMTTPILQPTEALSPEDGASTAL) are Extracellular-facing. Residue Thr-2 is glycosylated (O-linked (GalNAc...) threonine). The O-linked (GalNAc...) serine glycan is linked to Ser-3. O-linked (GalNAc...) threonine glycans are attached at residues Thr-6 and Thr-7. A glycan (O-linked (GalNAc...) serine) is linked at Ser-9. O-linked (GalNAc...) threonine glycans are attached at residues Thr-16, Thr-17, and Thr-23. Residues 37–57 (IAVVITVVFLTLLSVVILIFF) traverse the membrane as a helical; Signal-anchor for type III membrane protein segment. At 58–97 (YLYKNKGSYVTYEPTEGEPSAIVQMESDLAKGSEKEEYFI) the chain is on the cytoplasmic side.

Belongs to the SMAGP family. Post-translationally, O-glycosylated. The O-glycan is modified with sialic acid residues. As to expression, detected in breast, endometrium, colon and biliary tract. Detected in polarized epithelial structures characterized by cell-cell adhesion (at protein level).

The protein localises to the cell membrane. The protein resides in the cytoplasmic vesicle membrane. In terms of biological role, may play a role in epithelial cell-cell contacts. May play a role in tumor invasiveness and metastasis formation. The sequence is that of Small cell adhesion glycoprotein (SMAGP) from Homo sapiens (Human).